The following is a 146-amino-acid chain: Angiogenin (146 aa).

Positions 1–24 (MVMGLHLLLLVFILGLGLTPPTLA) are cleaved as a signal peptide. The residue at position 25 (Gln25) is a Pyrrolidone carboxylic acid. His37 serves as the catalytic Proton acceptor. Disulfide bonds link Cys50–Cys105, Cys63–Cys116, and Cys81–Cys131. Residues 55–59 (RLRNM) carry the Nucleolar localization signal motif. Residue Cys105 coordinates tRNA. The active-site Proton donor is His138.

This sequence belongs to the pancreatic ribonuclease family. Homodimer. Interacts with RNH1; inhibiting ANG ribonuclease activity. Interacts with PCNA.

It is found in the secreted. The protein localises to the nucleus. The protein resides in the nucleolus. It localises to the cytoplasm. Its subcellular location is the stress granule. Has weak tRNA ribonuclease activity by itself due to partial autoinhibition by its C-terminus, which folds into a short alpha-helix that partially occludes the substrate-binding site. In absence of stress, the ribonuclease activity is inhibited by RNH1 in the cytoplasm. In response to stress, dissociates from RNH1 in the cytoplasm and associates with cytoplasmic ribosomes with vacant A-sites: ribosomes directly activate the tRNA ribonuclease activity of ANG by refolding the C-terminal alpha-helix. In response to stress, the angiogenic activity of ANG is inhibited by RNH1 in the nucleus. In terms of biological role, secreted ribonuclease that can either promote or restrict cell proliferation of target cells, depending on the context. Endocytosed in target cells via its receptor PLXNB2 and translocates to the cytoplasm or nucleus. Under stress conditions, localizes to the cytoplasm and promotes the assembly of stress granules (SGs): specifically cleaves a subset of tRNAs within anticodon loops to produce tRNA-derived stress-induced fragments (tiRNAs), resulting in translation repression and inhibition of cell proliferation. tiRNas also prevent formation of apoptosome, thereby promoting cell survival. Preferentially cleaves RNAs between a pyrimidine and an adenosine residue, suggesting that it cleaves the anticodon loop of tRNA(Ala) (32-UUAGCAU-38) after positions 33 and 36. Cleaves a subset of tRNAs, including tRNA(Ala), tRNA(Glu), tRNA(Gly), tRNA(Lys), tRNA(Val), tRNA(His), tRNA(Asp) and tRNA(Sec). Under growth conditions and in differentiated cells, translocates to the nucleus and stimulates ribosomal RNA (rRNA) transcription, including that containing the initiation site sequences of 45S rRNA, thereby promoting cell growth and proliferation. Angiogenin induces vascularization of normal and malignant tissues via its ability to promote rRNA transcription. Involved in hematopoietic stem and progenitor cell (HSPC) growth and survival by promoting rRNA transcription in growth conditions and inhibiting translation in response to stress, respectively. Mediates the crosstalk between myeloid and intestinal epithelial cells to protect the intestinal epithelial barrier integrity: secreted by myeloid cells and promotes intestinal epithelial cells proliferation and survival. Also mediates osteoclast-endothelial cell crosstalk in growing bone: produced by osteoclasts and protects the neighboring vascular cells against senescence by promoting rRNA transcription. In Aotus trivirgatus (Three-striped night monkey), this protein is Angiogenin (ANG).